The chain runs to 79 residues: Probable [Fe-S]-dependent transcriptional repressor (79 aa).

Residues cysteine 54, cysteine 59, cysteine 62, and cysteine 68 each contribute to the iron-sulfur cluster site.

This sequence belongs to the FeoC family.

Functionally, may function as a transcriptional regulator that controls feoABC expression. This is Probable [Fe-S]-dependent transcriptional repressor from Photorhabdus laumondii subsp. laumondii (strain DSM 15139 / CIP 105565 / TT01) (Photorhabdus luminescens subsp. laumondii).